A 98-amino-acid chain; its full sequence is Conotoxin Di19A (98 aa).

A signal peptide spans 1–19 (MSTLGILLPIALLLPLANP). Residues 20-49 (AENGDGQAMPRTRNLRSLSFGRTLRRLEKR) constitute a propeptide that is removed on maturation. P53 bears the 4-hydroxyproline mark. Residue E63 is modified to 4-carboxyglutamate. 4-hydroxyproline is present on residues P68, P93, and P97.

Post-translationally, contains 5 disulfide bonds. In terms of tissue distribution, expressed by the venom duct.

It localises to the secreted. In terms of biological role, injection of the synthetic peptide causes a hyperexcitable phenotype in mice greater than three weeks of age at lower doses, and lethargy at higher doses. The chain is Conotoxin Di19A from Conus distans (Distant cone).